Reading from the N-terminus, the 318-residue chain is Acetaldehyde dehydrogenase 2 (318 aa).

Ser9–Ile12 serves as a coordination point for NAD(+). Cys129 serves as the catalytic Acyl-thioester intermediate. Residues Ser160–Asn168 and Asn288 each bind NAD(+).

It belongs to the acetaldehyde dehydrogenase family.

The enzyme catalyses acetaldehyde + NAD(+) + CoA = acetyl-CoA + NADH + H(+). This Mycolicibacterium vanbaalenii (strain DSM 7251 / JCM 13017 / BCRC 16820 / KCTC 9966 / NRRL B-24157 / PYR-1) (Mycobacterium vanbaalenii) protein is Acetaldehyde dehydrogenase 2.